The following is a 54-amino-acid chain: Small ribosomal subunit protein uS14 (54 aa).

Zn(2+)-binding residues include Cys-19, Cys-22, Cys-37, and Cys-40.

This sequence belongs to the universal ribosomal protein uS14 family. Zinc-binding uS14 subfamily. As to quaternary structure, part of the 30S ribosomal subunit. Zn(2+) is required as a cofactor.

Binds 16S rRNA, required for the assembly of 30S particles. In Pyrobaculum aerophilum (strain ATCC 51768 / DSM 7523 / JCM 9630 / CIP 104966 / NBRC 100827 / IM2), this protein is Small ribosomal subunit protein uS14.